The chain runs to 610 residues: Manganese lipoxygenase (610 aa).

The first 16 residues, 1–16, serve as a signal peptide directing secretion; sequence MVALLIFLGIFTCVET. Residues 47–610 enclose the Lipoxygenase domain; the sequence is FTLPNEDDEI…PGVIPFYLSV (564 aa). N157 and N259 each carry an N-linked (GlcNAc...) asparagine glycan. Mn(2+) is bound by residues H290 and H295. N386 carries N-linked (GlcNAc...) asparagine glycosylation. Mn(2+)-binding residues include H475 and N479. Residue N540 is glycosylated (N-linked (GlcNAc...) asparagine). Residue V610 participates in Mn(2+) binding.

It belongs to the lipoxygenase family. Manganese lipoxygenase subfamily. Requires Mn(2+) as cofactor. Post-translationally, N- and O-glycosylated.

Its subcellular location is the secreted. It carries out the reaction (9Z,12Z)-octadecadienoate + O2 = (11S)-hydroperoxy-(9Z,12Z)-octadecadienoate. It catalyses the reaction (9Z,12Z)-octadecadienoate + O2 = (11R)-hydroperoxy-(9Z,12Z)-octadecadienoate. The enzyme catalyses (9Z,12Z)-octadecadienoate + O2 = (13S)-hydroperoxy-(9Z,11E)-octadecadienoate. The catalysed reaction is (9Z,12Z,15Z)-octadecatrienoate + O2 = (11S)-hydroperoxy-(9Z,12Z,15Z)-octadecatrienoate. Lipoxygenase that metabolizes linoleic and alpha-linolenic acids to 9-, 11- and 13-hydroperoxy fatty acids. Oxidizes linoleic acid to mainly 11R-, 13S- and racemic 9-HPODE, and alpha-linolenic acid to 11-HPOTrE. In Fusarium oxysporum (strain Fo5176) (Fusarium vascular wilt), this protein is Manganese lipoxygenase.